Reading from the N-terminus, the 350-residue chain is C-X-C chemokine receptor type 1 (350 aa).

Over 1 to 39 (MSNITDPQMWDFDDLNFTGMPPTDEGYSPCRLETETLNK) the chain is Extracellular. Asn3 and Asn16 each carry an N-linked (GlcNAc...) asparagine glycan. A helical transmembrane segment spans residues 40–66 (YVVIITYALVFLLSLLGNSLVMLVILY). At 67 to 75 (SRVGRSVTD) the chain is on the cytoplasmic side. A helical membrane pass occupies residues 76 to 96 (VYLLNLALADLLFALTLPIWA). The Extracellular segment spans residues 97–111 (ASKVNGWIFGTFLCK). A disulfide bridge links Cys110 with Cys187. A helical membrane pass occupies residues 112–133 (VVSLLKEVNFYSGILLLACISV). Residues 134 to 154 (DRYLAIVHATRTLTQKRHLVK) lie on the Cytoplasmic side of the membrane. A helical transmembrane segment spans residues 155-174 (FVCLGCWGLSMNLSLPFFLF). Residues 175–199 (RQAYHPNNSSPVCYEVLGNDTAKWR) lie on the Extracellular side of the membrane. The helical transmembrane segment at 200-220 (MVLRILPHTFGFIVPLFVMLF) threads the bilayer. Over 221-242 (CYGFTLRTLFKAHMGQKHRAMR) the chain is Cytoplasmic. A helical membrane pass occupies residues 243–264 (VIFAVVLIFLLCWLPYNLVLLA). Residues 265 to 285 (DTLMRTQVIQESCERRNNIGR) lie on the Extracellular side of the membrane. Residues 286–308 (ALDATEILGFLHSCLNPIIYAFI) form a helical membrane-spanning segment. Over 309–350 (GQNFRHGFLKILAMHGLVSKEFLARHRVTSYTSSSVNVSSNL) the chain is Cytoplasmic.

This sequence belongs to the G-protein coupled receptor 1 family. Interacts with IL8. Interacts with GNAI2.

It is found in the cell membrane. Receptor to interleukin-8, which is a powerful neutrophils chemotactic factor. Binding of IL-8 to the receptor causes activation of neutrophils. This response is mediated via a G-protein that activates a phosphatidylinositol-calcium second messenger system. The polypeptide is C-X-C chemokine receptor type 1 (CXCR1) (Pan troglodytes (Chimpanzee)).